Consider the following 616-residue polypeptide: 1-deoxy-D-xylulose-5-phosphate synthase (616 aa).

Residues His74 and Gly115–Ser117 contribute to the thiamine diphosphate site. Residue Asp146 coordinates Mg(2+). Thiamine diphosphate is bound by residues Gly147 to Ala148, Asn175, Tyr282, and Glu365. Asn175 is a Mg(2+) binding site.

Belongs to the transketolase family. DXPS subfamily. Homodimer. The cofactor is Mg(2+). Thiamine diphosphate is required as a cofactor.

The enzyme catalyses D-glyceraldehyde 3-phosphate + pyruvate + H(+) = 1-deoxy-D-xylulose 5-phosphate + CO2. It participates in metabolic intermediate biosynthesis; 1-deoxy-D-xylulose 5-phosphate biosynthesis; 1-deoxy-D-xylulose 5-phosphate from D-glyceraldehyde 3-phosphate and pyruvate: step 1/1. Catalyzes the acyloin condensation reaction between C atoms 2 and 3 of pyruvate and glyceraldehyde 3-phosphate to yield 1-deoxy-D-xylulose-5-phosphate (DXP). This chain is 1-deoxy-D-xylulose-5-phosphate synthase, found in Chromobacterium violaceum (strain ATCC 12472 / DSM 30191 / JCM 1249 / CCUG 213 / NBRC 12614 / NCIMB 9131 / NCTC 9757 / MK).